We begin with the raw amino-acid sequence, 270 residues long: Tryptophan synthase alpha chain (270 aa).

Catalysis depends on proton acceptor residues E49 and D60.

It belongs to the TrpA family. As to quaternary structure, tetramer of two alpha and two beta chains.

It carries out the reaction (1S,2R)-1-C-(indol-3-yl)glycerol 3-phosphate + L-serine = D-glyceraldehyde 3-phosphate + L-tryptophan + H2O. It participates in amino-acid biosynthesis; L-tryptophan biosynthesis; L-tryptophan from chorismate: step 5/5. The alpha subunit is responsible for the aldol cleavage of indoleglycerol phosphate to indole and glyceraldehyde 3-phosphate. The chain is Tryptophan synthase alpha chain from Marinobacter nauticus (strain ATCC 700491 / DSM 11845 / VT8) (Marinobacter aquaeolei).